The following is a 191-amino-acid chain: Large ribosomal subunit protein uL5 (191 aa).

Belongs to the universal ribosomal protein uL5 family. In terms of assembly, part of the 50S ribosomal subunit; part of the 5S rRNA/L5/L18/L25 subcomplex. Contacts the 5S rRNA and the P site tRNA. Forms a bridge to the 30S subunit in the 70S ribosome.

This is one of the proteins that bind and probably mediate the attachment of the 5S RNA into the large ribosomal subunit, where it forms part of the central protuberance. In the 70S ribosome it contacts protein S13 of the 30S subunit (bridge B1b), connecting the 2 subunits; this bridge is implicated in subunit movement. Contacts the P site tRNA; the 5S rRNA and some of its associated proteins might help stabilize positioning of ribosome-bound tRNAs. The polypeptide is Large ribosomal subunit protein uL5 (Thermobifida fusca (strain YX)).